The chain runs to 57 residues: Small ribosomal subunit protein eS27 (57 aa).

Zn(2+) contacts are provided by cysteine 10, cysteine 13, cysteine 29, and cysteine 32. The C4-type zinc finger occupies cysteine 10–cysteine 32.

It belongs to the eukaryotic ribosomal protein eS27 family. Part of the 30S ribosomal subunit. Requires Zn(2+) as cofactor.

This chain is Small ribosomal subunit protein eS27, found in Halobacterium salinarum (strain ATCC 29341 / DSM 671 / R1).